Consider the following 127-residue polypeptide: Fluoride-specific ion channel FluC (127 aa).

4 helical membrane passes run 7–27 (LFLISCGASLGAMSRHGLTLL), 37–57 (FGTLIANYIGCLIMGIMLAMF), 70–90 (FFVTGFLGSLTTFSAFSAEVI), and 102–122 (ITITSLHILGCLFFTTLGVFI). 2 residues coordinate Na(+): glycine 77 and threonine 80.

This sequence belongs to the fluoride channel Fluc/FEX (TC 1.A.43) family.

It is found in the cell inner membrane. It carries out the reaction fluoride(in) = fluoride(out). Na(+) is not transported, but it plays an essential structural role and its presence is essential for fluoride channel function. Functionally, fluoride-specific ion channel. Important for reducing fluoride concentration in the cell, thus reducing its toxicity. The protein is Fluoride-specific ion channel FluC of Histophilus somni (strain 129Pt) (Haemophilus somnus).